A 354-amino-acid chain; its full sequence is DNA polymerase IV (354 aa).

Residues 6 to 187 form the UmuC domain; the sequence is IIHVDCDCFY…LPVARLHGVG (182 aa). Mg(2+) is bound by residues D10 and D105. Residue E106 is part of the active site.

The protein belongs to the DNA polymerase type-Y family. In terms of assembly, monomer. Requires Mg(2+) as cofactor.

The protein resides in the cytoplasm. It carries out the reaction DNA(n) + a 2'-deoxyribonucleoside 5'-triphosphate = DNA(n+1) + diphosphate. Its function is as follows. Poorly processive, error-prone DNA polymerase involved in untargeted mutagenesis. Copies undamaged DNA at stalled replication forks, which arise in vivo from mismatched or misaligned primer ends. These misaligned primers can be extended by PolIV. Exhibits no 3'-5' exonuclease (proofreading) activity. May be involved in translesional synthesis, in conjunction with the beta clamp from PolIII. In Pseudomonas putida (strain ATCC 47054 / DSM 6125 / CFBP 8728 / NCIMB 11950 / KT2440), this protein is DNA polymerase IV.